The primary structure comprises 520 residues: Cobalt-zinc-cadmium resistance protein CzcB (520 aa).

A helical membrane pass occupies residues 9–29 (AAIAAIVLVGGVATGGVLLSG). Residues 28-85 (SGRSAPEEQGGHSESKGHGDTEHHGKQAAEADHKDDKSHGDGEHHEVKKGPNGGALFS) are disordered. Residues 32–76 (APEEQGGHSESKGHGDTEHHGKQAAEADHKDDKSHGDGEHHEVKK) are compositionally biased toward basic and acidic residues. Positions 286–320 (EQKISAEQDYLSARNALQEAQISVQNAQQKLTAIG) form a coiled coil.

Belongs to the membrane fusion protein (MFP) (TC 8.A.1) family.

The protein resides in the cell inner membrane. In terms of biological role, czcA and CzcB together would act in zinc efflux nearly as effectively as the complete czc efflux system (CzcABC). The CzcB protein is thought to funnel zinc cations to the CzcA transport protein. The polypeptide is Cobalt-zinc-cadmium resistance protein CzcB (czcB) (Cupriavidus metallidurans (strain ATCC 43123 / DSM 2839 / NBRC 102507 / CH34) (Ralstonia metallidurans)).